A 250-amino-acid polypeptide reads, in one-letter code: Beta-lactamase HcpA (250 aa).

Residues 1 to 25 (MLGSVKKTLFGVLCLGALCLRGLMA) form the signal peptide. TPR repeat units follow at residues 29-62 (AKEL…KEGF), 67-98 (LGAF…NDGY), 100-133 (CRLL…LNHA), 134-169 (EGCT…LKDS), and 170-202 (PGCI…KDGR). Cystine bridges form between Cys-56–Cys-64, Cys-92–Cys-100, Cys-128–Cys-136, Cys-164–Cys-172, Cys-196–Cys-204, and Cys-232–Cys-240.

It belongs to the hcp beta-lactamase family.

It is found in the secreted. The enzyme catalyses a beta-lactam + H2O = a substituted beta-amino acid. Inhibited by cloxacillin and oxacillin but not by ACA derivatives or metal chelators. Functionally, slowly hydrolyzes 6-aminopenicillinic acid and 7-aminocephalosporanic acid (ACA) derivatives. May be involved in the synthesis of the cell wall peptidoglycan. This Helicobacter pylori (strain J99 / ATCC 700824) (Campylobacter pylori J99) protein is Beta-lactamase HcpA (hcpA).